Here is a 393-residue protein sequence, read N- to C-terminus: Probable acetyl-CoA acyltransferase (393 aa).

Residue C88 is the Acyl-thioester intermediate of the active site. Catalysis depends on proton acceptor residues H349 and C378.

It belongs to the thiolase-like superfamily. Thiolase family.

It localises to the cytoplasm. It catalyses the reaction 2 acetyl-CoA = acetoacetyl-CoA + CoA. The sequence is that of Probable acetyl-CoA acyltransferase from Staphylococcus aureus (strain MRSA252).